The following is a 102-amino-acid chain: Co-chaperonin GroES (102 aa).

The protein belongs to the GroES chaperonin family. As to quaternary structure, heptamer of 7 subunits arranged in a ring. Interacts with the chaperonin GroEL.

The protein localises to the cytoplasm. Functionally, together with the chaperonin GroEL, plays an essential role in assisting protein folding. The GroEL-GroES system forms a nano-cage that allows encapsulation of the non-native substrate proteins and provides a physical environment optimized to promote and accelerate protein folding. GroES binds to the apical surface of the GroEL ring, thereby capping the opening of the GroEL channel. The chain is Co-chaperonin GroES from Chlamydia trachomatis serovar L2 (strain ATCC VR-902B / DSM 19102 / 434/Bu).